We begin with the raw amino-acid sequence, 554 residues long: uncharacterized protein (554 aa).

Disordered stretches follow at residues 1–127, 139–173, 293–395, and 416–509; these read MTTH…NYND, IEDD…SKAG, NNNN…PLSE, and FGFS…RKIR. Composition is skewed to low complexity over residues 9–30, 46–55, and 63–125; these read SSSN…NNNI, DPTSSSSPTN, and SNSN…LINY. Residues 139 to 153 are compositionally biased toward acidic residues; sequence IEDDEEYEEIGDEES. A compositionally biased stretch (polar residues) spans 164–173; it reads NDSLNGSKAG. Composition is skewed to low complexity over residues 293-387, 416-449, and 461-484; these read NNNN…CSSN, FGFS…SSIS, and SPPL…NNNH. Residues 485–508 show a composition bias toward basic residues; that stretch reads HNNHHQNHHHQNHNHQHHSKKRKI.

This is an uncharacterized protein from Dictyostelium discoideum (Social amoeba).